The following is a 262-amino-acid chain: Hydroxyethylthiazole kinase (262 aa).

Methionine 40 provides a ligand contact to substrate. The ATP site is built by lysine 116 and threonine 162. Glycine 189 contributes to the substrate binding site.

The protein belongs to the Thz kinase family. The cofactor is Mg(2+).

It catalyses the reaction 5-(2-hydroxyethyl)-4-methylthiazole + ATP = 4-methyl-5-(2-phosphooxyethyl)-thiazole + ADP + H(+). The protein operates within cofactor biosynthesis; thiamine diphosphate biosynthesis; 4-methyl-5-(2-phosphoethyl)-thiazole from 5-(2-hydroxyethyl)-4-methylthiazole: step 1/1. Its function is as follows. Catalyzes the phosphorylation of the hydroxyl group of 4-methyl-5-beta-hydroxyethylthiazole (THZ). The sequence is that of Hydroxyethylthiazole kinase from Clostridioides difficile (strain 630) (Peptoclostridium difficile).